A 61-amino-acid chain; its full sequence is Insect toxin BsIT1 (61 aa).

Residues 1 to 61 (DGYILMRNGC…KHLNYHKKTC (61 aa)) form the LCN-type CS-alpha/beta domain. Intrachain disulfides connect cysteine 10–cysteine 61, cysteine 14–cysteine 35, cysteine 21–cysteine 42, and cysteine 25–cysteine 44.

Belongs to the long (4 C-C) scorpion toxin superfamily. Sodium channel inhibitor family. Beta subfamily. As to expression, expressed by the venom gland.

Its subcellular location is the secreted. Depressant insect beta-toxins cause a transient contraction paralysis followed by a slow flaccid paralysis. They bind voltage-independently at site-4 of sodium channels (Nav) and shift the voltage of activation toward more negative potentials thereby affecting sodium channel activation and promoting spontaneous and repetitive firing. This toxin is active only on insects and causes a transient contraction paralysis followed by a slow flaccid paralysis. This chain is Insect toxin BsIT1, found in Hottentotta tamulus sindicus (Scorpion).